Reading from the N-terminus, the 779-residue chain is Beta-galactosidase 15 (779 aa).

A signal peptide spans 1–19; the sequence is MVSLSFILCCVLVSSCAYA. Asn148 is a glycosylation site (N-linked (GlcNAc...) asparagine). Glu178 acts as the Proton donor in catalysis. The active-site Nucleophile is Glu247. Residues Asn248, Asn345, Asn374, Asn489, Asn495, and Asn555 are each glycosylated (N-linked (GlcNAc...) asparagine). One can recognise an SUEL-type lectin domain in the interval 694–779; sequence VYEKNVLELS…AKRLAVEAIC (86 aa).

It belongs to the glycosyl hydrolase 35 family. In terms of tissue distribution, ubiquitous, with higher levels in roots and siliques.

Its subcellular location is the secreted. The protein localises to the extracellular space. It localises to the apoplast. The catalysed reaction is Hydrolysis of terminal non-reducing beta-D-galactose residues in beta-D-galactosides.. In Arabidopsis thaliana (Mouse-ear cress), this protein is Beta-galactosidase 15 (BGAL15).